The chain runs to 93 residues: DNA-binding protein HB1 (93 aa).

Belongs to the bacterial histone-like protein family. As to quaternary structure, homodimer.

Its function is as follows. Histone-like DNA-binding protein which is capable of wrapping DNA to stabilize it, and thus to prevent its denaturation under extreme environmental conditions. The polypeptide is DNA-binding protein HB1 (hup) (Bifidobacterium longum (strain NCC 2705)).